The primary structure comprises 202 residues: Chromophore lyase CpcT/CpeT 2 (202 aa).

This sequence belongs to the CpcT/CpeT biliprotein lyase family.

In terms of biological role, covalently attaches a chromophore to Cys residue(s) of phycobiliproteins. The protein is Chromophore lyase CpcT/CpeT 2 of Gloeobacter violaceus (strain ATCC 29082 / PCC 7421).